Reading from the N-terminus, the 1080-residue chain is Zorya protein ZorD (1080 aa).

The Helicase ATP-binding domain occupies 596–779 (LRSPEETAGC…WSLFDFAQPG (184 aa)). The Helicase C-terminal domain occupies 904–1069 (KLNWLLKILA…DMLCATPDLS (166 aa)).

Its function is as follows. Component of antiviral defense system Zorya type I, composed of ZorA, ZorB, ZorC and ZorD. Expression of Zorya type I in E.coli (strain MG1655) confers 10,000-fold resistance to phage SECphi27, 100-fold resistance to lambda, and 10-fold resistance to T7. While most T7 infected Zorya-containing cells undergo abortive infection, a minority produce viable phage progeny. These eventually accumulate to a high multiplicity of infection, leading to culture collapse by 2 hours after initial infection. ZorA and ZorB probably assemble in the cell inner membrane and exert their effect there. This may have ATPase activity. This is Zorya protein ZorD from Escherichia coli O139:H28 (strain E24377A / ETEC).